The following is a 354-amino-acid chain: Chorismate synthase (354 aa).

NADP(+) contacts are provided by R48 and R54. FMN contacts are provided by residues 125–127, 238–239, G278, 293–297, and R319; these read RSS, NA, and KPTSS.

This sequence belongs to the chorismate synthase family. In terms of assembly, homotetramer. FMNH2 is required as a cofactor.

The catalysed reaction is 5-O-(1-carboxyvinyl)-3-phosphoshikimate = chorismate + phosphate. The protein operates within metabolic intermediate biosynthesis; chorismate biosynthesis; chorismate from D-erythrose 4-phosphate and phosphoenolpyruvate: step 7/7. Functionally, catalyzes the anti-1,4-elimination of the C-3 phosphate and the C-6 proR hydrogen from 5-enolpyruvylshikimate-3-phosphate (EPSP) to yield chorismate, which is the branch point compound that serves as the starting substrate for the three terminal pathways of aromatic amino acid biosynthesis. This reaction introduces a second double bond into the aromatic ring system. The polypeptide is Chorismate synthase (Blochmanniella pennsylvanica (strain BPEN)).